Here is a 106-residue protein sequence, read N- to C-terminus: Transcriptional and immune response regulator (106 aa).

In terms of assembly, monomer. Interacts with NOTCH2 (via ANK repeats), the interaction inhibits the nuclear translocation of NOTCH2 N2ICD. Interacts (C-terminus) with CBY1 (C-terminus), TCIM competes with CTNNB1 for the interaction with CBY1. As to expression, expressed in liver, expression levels decrease in regenerating liver. In bone marrow, expressed in large progenitor-like cells, cells with ring-shaped nuclei and, at lower, levels in hematopietic stem cell-like cells with round nuclei (at protein level).

Its subcellular location is the cytoplasm. The protein resides in the nucleus. It is found in the nucleolus. The protein localises to the nucleus speckle. Its function is as follows. Seems to be involved in the regulation of cell growth an differentiation, may play different and opposite roles depending on the tissue or cell type. May enhance the WNT-CTNNB1 pathway by relieving antagonistic activity of CBY1. Enhances the proliferation of follicular dendritic cells. Plays a role in the mitogen-activated MAPK2/3 signaling pathway, positively regulates G1-to-S-phase transition of the cell cycle. In endothelial cells, enhances key inflammatory mediators and inflammatory response through the modulation of NF-kappaB transcriptional regulatory activity. Involved in the regulation of heat shock response, seems to play a positive feedback with HSF1 to modulate heat-shock downstream gene expression. Plays a role in the regulation of hematopoiesis even if the mechanisms are unknown. In cancers such as thyroid or lung cancer, it has been described as promoter of cell proliferation, G1-to-S-phase transition and inhibitor of apoptosis. However, it negatively regulates self-renewal of liver cancer cells via suppresion of NOTCH2 signaling. This Mus musculus (Mouse) protein is Transcriptional and immune response regulator.